Here is a 390-residue protein sequence, read N- to C-terminus: Probable NADH-dependent butanol dehydrogenase 2 (390 aa).

This sequence belongs to the iron-containing alcohol dehydrogenase family.

It participates in alcohol metabolism; butanol biosynthesis. The sequence is that of Probable NADH-dependent butanol dehydrogenase 2 (yugK) from Bacillus subtilis (strain 168).